A 214-amino-acid polypeptide reads, in one-letter code: uncharacterized protein (214 aa).

Residues 1-194 (MVSANREMAV…MHYSEYLSYV (194 aa)) form the AMMECR1 domain.

This is an uncharacterized protein from Arabidopsis thaliana (Mouse-ear cress).